An 841-amino-acid polypeptide reads, in one-letter code: Probable outer membrane protein pmp2 (841 aa).

The signal sequence occupies residues 1–24 (MKIPLRFLLISLVPTLSMSNLLGA). Positions 537-841 (GAPYEKRFWV…NVDAGSKIKF (305 aa)) constitute an Autotransporter domain.

Belongs to the PMP outer membrane protein family.

Its subcellular location is the secreted. The protein localises to the cell wall. It is found in the cell outer membrane. The protein is Probable outer membrane protein pmp2 (pmp2) of Chlamydia pneumoniae (Chlamydophila pneumoniae).